The following is a 165-amino-acid chain: Short form salivary protein D7R1 (165 aa).

A signal peptide spans 1-21 (MFNKLHLVSLLACGLFVIAQA). 3 disulfide bridges follow: Cys-27–Cys-59, Cys-40–Cys-164, and Cys-98–Cys-117. Glu-28, His-56, Tyr-115, Asp-132, and Glu-135 together coordinate serotonin. Positions 115, 132, and 135 each coordinate histamine.

Belongs to the PBP/GOBP family. Female salivary gland. Not detected in female carcass without salivary glands. Not detected in male tissues.

It is found in the secreted. Functionally, modulates blood feeding of female mosquitoes on vertebrate species by binding and sequestering different mediators involved in the host response. Binds serotonin and histamine. Increases blood clotting time. The protein is Short form salivary protein D7R1 of Anopheles gambiae (African malaria mosquito).